The primary structure comprises 76 residues: Probable insulin-like peptide alpha-type 1 (76 aa).

Positions 1-24 (MKTYSFFVLFIVFIFFISSSKSHS) are cleaved as a signal peptide. Intrachain disulfides connect cysteine 32–cysteine 60, cysteine 44–cysteine 73, and cysteine 48–cysteine 74.

The protein belongs to the insulin family.

The protein resides in the secreted. In Caenorhabditis elegans, this protein is Probable insulin-like peptide alpha-type 1 (ins-21).